A 981-amino-acid chain; its full sequence is Translation initiation factor IF-2 (981 aa).

Residues 31–370 form a disordered region; that stretch reads FVKSASSTVE…SKRAKRAEYE (340 aa). Residues 64 to 87 show a composition bias toward low complexity; sequence GAAAPAARPAAKPGAPSPSAAKPG. A compositionally biased stretch (pro residues) spans 88–111; the sequence is GPRPGPKPAAPAPAAPAAPAPAAP. Over residues 112 to 121 the composition is skewed to low complexity; the sequence is AAPAAAAPAA. A compositionally biased stretch (pro residues) spans 136 to 145; it reads PAQPARPAPA. Low complexity predominate over residues 146–165; sequence APAASAPAAPAAPAAPSTGA. Positions 256–269 are enriched in pro residues; that stretch reads RPSPGSMPPRPNPG. The span at 270-279 shows a compositional bias: low complexity; sequence AMPARSARPA. Residues 280 to 339 show a composition bias toward gly residues; the sequence is PGGGGRPGRPGGAPGGRPGGGGGGYRGGGAPGAGAGAGAPGGAAPAGGFRGRPGGGGRPG. Basic residues predominate over residues 356-365; the sequence is RRGRKSKRAK. Residues 477–649 form the tr-type G domain; sequence SRPPVVTVMG…VLLTADASLD (173 aa). The tract at residues 486 to 493 is G1; that stretch reads GHVDHGKT. 486 to 493 is a GTP binding site; the sequence is GHVDHGKT. Positions 511–515 are G2; the sequence is GITQH. The G3 stretch occupies residues 536–539; that stretch reads DTPG. Residues 536–540 and 590–593 contribute to the GTP site; these read DTPGH and NKID. The segment at 590–593 is G4; it reads NKID. Positions 626-628 are G5; that stretch reads SAK.

The protein belongs to the TRAFAC class translation factor GTPase superfamily. Classic translation factor GTPase family. IF-2 subfamily.

The protein localises to the cytoplasm. In terms of biological role, one of the essential components for the initiation of protein synthesis. Protects formylmethionyl-tRNA from spontaneous hydrolysis and promotes its binding to the 30S ribosomal subunits. Also involved in the hydrolysis of GTP during the formation of the 70S ribosomal complex. The polypeptide is Translation initiation factor IF-2 (Rhodococcus erythropolis (strain PR4 / NBRC 100887)).